A 736-amino-acid chain; its full sequence is Myotubularin-related protein 12 (736 aa).

Residues 182-558 (YLRSTNPEML…RQLSLPSSAF (377 aa)) enclose the Myotubularin phosphatase domain. The disordered stretch occupies residues 672–691 (SLATQPDHPPPLHHRLPSFG).

The protein belongs to the protein-tyrosine phosphatase family. Non-receptor class myotubularin subfamily. In terms of assembly, heterodimer with lipid phosphatase mtm1. In skeletal muscles, the interaction stabilizes both mtmr12 and mtm1 protein levels.

It localises to the cytoplasm. The protein resides in the sarcoplasmic reticulum. It is found in the myofibril. The protein localises to the sarcomere. In terms of biological role, acts as an adapter for the myotubularin phosphatase mtm1 to regulate mtm1 protein stability and possibly its intracellular location. By stabilizing mtm1 protein levels, required for skeletal muscle maintenance but not for myogenesis. In skeletal muscle cells, does not regulate mtm1 subcellular localization. This chain is Myotubularin-related protein 12 (mtmr12), found in Danio rerio (Zebrafish).